Reading from the N-terminus, the 343-residue chain is Dimethyladenosine transferase 1, mitochondrial (343 aa).

A mitochondrion-targeting transit peptide spans 1–27 (MAASGKLSTWRLPPLPTIREIIKLLRV). S-adenosyl-L-methionine is bound by residues L38, G63, E85, K86, D111, V112, and N141.

It belongs to the class I-like SAM-binding methyltransferase superfamily. rRNA adenine N(6)-methyltransferase family. KsgA subfamily. In terms of assembly, interacts with mitochondrial RNA polymerase POLRMT. Interacts with TFAM. Bound to the maturing mtSSU until the late stages of assembly.

The protein resides in the mitochondrion. It carries out the reaction adenosine(N)/adenosine(N+1) in rRNA + 4 S-adenosyl-L-methionine = N(6)-dimethyladenosine(N)/N(6)-dimethyladenosine(N+1) in rRNA + 4 S-adenosyl-L-homocysteine + 4 H(+). Its function is as follows. S-adenosyl-L-methionine-dependent methyltransferase which specifically dimethylates mitochondrial 12S rRNA at the conserved stem loop. Also required for basal transcription of mitochondrial DNA, probably via its interaction with POLRMT and TFAM. Stimulates transcription independently of the methyltransferase activity. Mitochondrial methyltransferase which uses S-adenosyl methionine to dimethylate two highly conserved adjacent adenosine residues (A1583 and A1584) within the loop of helix 45 at the 3-prime end of 12S rRNA, thereby regulating the assembly or stability of the small subunit of the mitochondrial ribosome. Also required for basal transcription of mitochondrial DNA, probably via its interaction with POLRMT and TFAM. Stimulates transcription independently of the methyltransferase activity. The polypeptide is Dimethyladenosine transferase 1, mitochondrial (TFB1M) (Pongo abelii (Sumatran orangutan)).